The sequence spans 67 residues: Surface composition regulator (67 aa).

The protein belongs to the GlgS family.

Functionally, major determinant of cell surface composition. Negatively regulates motility, adhesion and synthesis of biofilm exopolysaccharides. The sequence is that of Surface composition regulator from Salmonella enteritidis PT4 (strain P125109).